The primary structure comprises 206 residues: Small ribosomal subunit protein uS4 (206 aa).

An S4 RNA-binding domain is found at 98–163 (MRLDNIVYRL…SEKFKTFVEN (66 aa)).

This sequence belongs to the universal ribosomal protein uS4 family. As to quaternary structure, part of the 30S ribosomal subunit. Contacts protein S5. The interaction surface between S4 and S5 is involved in control of translational fidelity.

Its function is as follows. One of the primary rRNA binding proteins, it binds directly to 16S rRNA where it nucleates assembly of the body of the 30S subunit. In terms of biological role, with S5 and S12 plays an important role in translational accuracy. This chain is Small ribosomal subunit protein uS4, found in Clostridium beijerinckii (strain ATCC 51743 / NCIMB 8052) (Clostridium acetobutylicum).